Here is a 1040-residue protein sequence, read N- to C-terminus: Multidrug resistance protein MdtB (1040 aa).

Helical transmembrane passes span 16-36 (FIMR…AGII), 347-367 (LMMA…NIPA), 369-389 (IIPG…MVFL), 396-416 (LTLM…IVVI), 440-460 (IGFT…PLLF), 472-492 (FAIT…TLTP), 537-557 (WLTL…WVFI), 863-883 (LGST…VLGI), 888-908 (FIHP…ALLA), 911-931 (IAGS…IGIV), 968-988 (ILMT…STGV), and 998-1018 (IGMV…TPVI).

It belongs to the resistance-nodulation-cell division (RND) (TC 2.A.6) family. MdtB subfamily. In terms of assembly, part of a tripartite efflux system composed of MdtA, MdtB and MdtC. MdtB forms a heteromultimer with MdtC.

The protein resides in the cell inner membrane. In terms of biological role, the MdtABC tripartite complex confers resistance against novobiocin and deoxycholate. The sequence is that of Multidrug resistance protein MdtB from Escherichia fergusonii (strain ATCC 35469 / DSM 13698 / CCUG 18766 / IAM 14443 / JCM 21226 / LMG 7866 / NBRC 102419 / NCTC 12128 / CDC 0568-73).